A 406-amino-acid polypeptide reads, in one-letter code: Sorting nexin-6 (406 aa).

Residue methionine 1 is modified to N-acetylmethionine. Methionine 2 is subject to N-acetylmethionine; in Sorting nexin-6, N-terminally processed. Residues 2–179 (MEGLDDGPDF…NQDLSVRGKN (178 aa)) form an interaction with PIM1 region. The region spanning 26 to 173 (LQSDAALQVD…HVFLEYNQDL (148 aa)) is the PX domain. A 1,2-diacyl-sn-glycero-3-phospho-(1D-myo-inositol-4,5-bisphosphate) contacts are provided by residues 41 to 47 (SERDRVK), 100 to 106 (FDASREK), and 114 to 117 (EGSM). Residues serine 116 and serine 194 each carry the phosphoserine modification. The tract at residues 182–199 (EKLEDFFKNMVKSADGVI) is membrane-binding amphipathic helix. One can recognise a BAR domain in the interval 203 to 406 (VKDVDDFFEH…NCLAVLNGDT (204 aa)).

This sequence belongs to the sorting nexin family. As to quaternary structure, forms heterodimers with BAR domain-containing sorting nexins SNX1 and SNX2. The heterodimers are proposed to self-assemble into helical arrays on the membrane to stabilize and expand local membrane curvature underlying endosomal tubule formation. Thought to be a component of the originally described retromer complex (also called SNX-BAR retromer) which is a pentamer containing the heterotrimeric retromer cargo-selective complex (CSC), also described as vacuolar protein sorting subcomplex (VPS), and a heterodimeric membrane-deforming subcomplex formed between SNX1 or SNX2 and SNX5 or SNX6 (also called SNX-BAR subcomplex); the respective CSC and SNX-BAR subcomplexes associate with low affinity. Interacts with SNX1, SNX2, VPS26A, VPS29, VPS35, TGFB receptors, BACE1, BRMS1, PIP5K1C. Interacts with DCTN1; the association with DCTN1 is involved in movement of retromer-c ontaining vesicles toward the TGN. Interacts with PIM1; translocating SNX6 to the nucleus. Interacts with CDKN1B and GIT1. In vitro phosphorylated by PIM1; not affecting PIM1-dependent nuclear translocation.

The protein localises to the early endosome membrane. It localises to the cytoplasmic vesicle. It is found in the cytoplasm. The protein resides in the nucleus. Its function is as follows. Involved in several stages of intracellular trafficking. Interacts with membranes phosphatidylinositol 3,4-bisphosphate and/or phosphatidylinositol 4,5-bisphosphate. Acts in part as component of the retromer membrane-deforming SNX-BAR subcomplex. The SNX-BAR retromer mediates retrograde transport of cargo proteins from endosomes to the trans-Golgi network (TGN) and is involved in endosome-to-plasma membrane transport for cargo protein recycling. The SNX-BAR subcomplex functions to deform the donor membrane into a tubular profile called endosome-to-TGN transport carrier (ETC). Does not have in vitro vesicle-to-membrane remodeling activity. Involved in retrograde endosome-to-TGN transport of lysosomal enzyme receptor IGF2R. May function as link between transport vesicles and dynactin. Negatively regulates retrograde transport of BACE1 from the cell surface to the trans-Golgi network. Involved in E-cadherin sorting and degradation; inhibits PIP5K1C-mediated E-cadherin degradation. In association with GIT1 involved in EGFR degradation. Promotes lysosomal degradation of CDKN1B. May contribute to transcription regulation. The polypeptide is Sorting nexin-6 (Snx6) (Mus musculus (Mouse)).